The primary structure comprises 198 residues: Recombination protein RecR (198 aa).

The segment at 57-72 (CSVCGHITENDPCYIC) adopts a C4-type zinc-finger fold. Residues 80-175 (SVICVVEDDK…KVTRLAQGLS (96 aa)) form the Toprim domain.

Belongs to the RecR family.

In terms of biological role, may play a role in DNA repair. It seems to be involved in an RecBC-independent recombinational process of DNA repair. It may act with RecF and RecO. This Staphylococcus haemolyticus (strain JCSC1435) protein is Recombination protein RecR.